Reading from the N-terminus, the 236-residue chain is UPF0177 protein YaiH (236 aa).

Transmembrane regions (helical) follow at residues 16-36 (YFSLFILLFAIYWFPDVILGY), 51-71 (ATATWIFLGNMAISLFLGILI), 90-110 (ILFLLFTTIVLFIIYFFTFTY), 131-151 (IVFPFVQFISFAICAPIFEEA), 180-200 (TGANPILIVYLPMSVVLTLIY), and 210-230 (ILVHCLMNALLPTIIVFLQTI).

Belongs to the UPF0177 family.

It is found in the cell membrane. The chain is UPF0177 protein YaiH (yaiH) from Lactococcus lactis subsp. lactis (strain IL1403) (Streptococcus lactis).